The following is a 178-amino-acid chain: Cytochrome b6-f complex iron-sulfur subunit (178 aa).

Residues 20–42 form a helical membrane-spanning segment; that stretch reads LLTFGSVTGVALGALYPVVNYFI. In terms of domain architecture, Rieske spans 65–161; that stretch reads ATGWLSSHPE…VSVENDNVFV (97 aa). [2Fe-2S] cluster is bound by residues Cys-107, His-109, Cys-125, and His-128. Cys-112 and Cys-127 are oxidised to a cystine.

The protein belongs to the Rieske iron-sulfur protein family. In terms of assembly, the 4 large subunits of the cytochrome b6-f complex are cytochrome b6, subunit IV (17 kDa polypeptide, PetD), cytochrome f and the Rieske protein, while the 4 small subunits are PetG, PetL, PetM and PetN. The complex functions as a dimer. Requires [2Fe-2S] cluster as cofactor.

It localises to the cellular thylakoid membrane. It catalyses the reaction 2 oxidized [plastocyanin] + a plastoquinol + 2 H(+)(in) = 2 reduced [plastocyanin] + a plastoquinone + 4 H(+)(out). In terms of biological role, component of the cytochrome b6-f complex, which mediates electron transfer between photosystem II (PSII) and photosystem I (PSI), cyclic electron flow around PSI, and state transitions. The chain is Cytochrome b6-f complex iron-sulfur subunit from Parasynechococcus marenigrum (strain WH8102).